We begin with the raw amino-acid sequence, 599 residues long: Histone-arginine methyltransferase CARMER (599 aa).

The SAM-dependent MTase PRMT-type domain occupies 127-434; the sequence is ASQYFQFYGY…QRQSYDVEID (308 aa). The S-adenosyl-L-methionine site is built by Q140, R149, G173, E195, E224, and T252. An Asymmetric dimethylarginine; by autocatalysis modification is found at R487.

Belongs to the class I-like SAM-binding methyltransferase superfamily. Protein arginine N-methyltransferase family. In terms of assembly, homodimer. Post-translationally, the dimethylated protein is the major form.

It localises to the cytoplasm. The protein localises to the nucleus. The enzyme catalyses L-arginyl-[protein] + 2 S-adenosyl-L-methionine = N(omega),N(omega)-dimethyl-L-arginyl-[protein] + 2 S-adenosyl-L-homocysteine + 2 H(+). In terms of biological role, methylates (mono- and asymmetric dimethylation) the guanidino nitrogens of arginyl residues in proteins. May methylate histone H3 at 'Arg-17' and activate transcription via chromatin remodeling. The protein is Histone-arginine methyltransferase CARMER (Art4) of Culex quinquefasciatus (Southern house mosquito).